We begin with the raw amino-acid sequence, 175 residues long: Large ribosomal subunit protein uL10 (175 aa).

This sequence belongs to the universal ribosomal protein uL10 family. Part of the ribosomal stalk of the 50S ribosomal subunit. The N-terminus interacts with L11 and the large rRNA to form the base of the stalk. The C-terminus forms an elongated spine to which L12 dimers bind in a sequential fashion forming a multimeric L10(L12)X complex.

In terms of biological role, forms part of the ribosomal stalk, playing a central role in the interaction of the ribosome with GTP-bound translation factors. The sequence is that of Large ribosomal subunit protein uL10 from Prochlorococcus marinus (strain MIT 9211).